Reading from the N-terminus, the 463-residue chain is Soluble pyridine nucleotide transhydrogenase (463 aa).

An FAD-binding site is contributed by 35-44 (EKQQAVGGNC).

It belongs to the class-I pyridine nucleotide-disulfide oxidoreductase family. Requires FAD as cofactor.

The protein localises to the cytoplasm. It catalyses the reaction NAD(+) + NADPH = NADH + NADP(+). Conversion of NADPH, generated by peripheral catabolic pathways, to NADH, which can enter the respiratory chain for energy generation. In Chromohalobacter salexigens (strain ATCC BAA-138 / DSM 3043 / CIP 106854 / NCIMB 13768 / 1H11), this protein is Soluble pyridine nucleotide transhydrogenase.